The sequence spans 196 residues: Pyridoxal 5'-phosphate synthase subunit PdxT (196 aa).

Residue 52-54 (GES) coordinates L-glutamine. Cys-84 acts as the Nucleophile in catalysis. L-glutamine contacts are provided by residues Arg-113 and 141-142 (IR). Residues His-178 and Glu-180 each act as charge relay system in the active site.

Belongs to the glutaminase PdxT/SNO family. In the presence of PdxS, forms a dodecamer of heterodimers. Only shows activity in the heterodimer.

The catalysed reaction is aldehydo-D-ribose 5-phosphate + D-glyceraldehyde 3-phosphate + L-glutamine = pyridoxal 5'-phosphate + L-glutamate + phosphate + 3 H2O + H(+). The enzyme catalyses L-glutamine + H2O = L-glutamate + NH4(+). It functions in the pathway cofactor biosynthesis; pyridoxal 5'-phosphate biosynthesis. In terms of biological role, catalyzes the hydrolysis of glutamine to glutamate and ammonia as part of the biosynthesis of pyridoxal 5'-phosphate. The resulting ammonia molecule is channeled to the active site of PdxS. The sequence is that of Pyridoxal 5'-phosphate synthase subunit PdxT from Pyrococcus horikoshii (strain ATCC 700860 / DSM 12428 / JCM 9974 / NBRC 100139 / OT-3).